The sequence spans 90 residues: UPF0335 protein R02793 (90 aa).

The protein belongs to the UPF0335 family.

In Rhizobium meliloti (strain 1021) (Ensifer meliloti), this protein is UPF0335 protein R02793.